We begin with the raw amino-acid sequence, 594 residues long: MTSFTESKKLDEIESPVPEIIVPSTTNGNGTIESYKEKSVGTSFLDFFRSYKLRPDNEFAEVHNSEDFLKPRHLQMIAIGSCIGTGLFVSTGKSLKNAGPGSLMINFIILSAMILALILSLGEMCCFLPNQSSITMYTGRLLNNNIGFAQSWLYFWIWLTVLPSEISAACEVVDFWTTQHLNPAIWVTIFLAYVVLVNAFGARSYGECEFVSSFLKVVIVIIFFFVAIIINCGAAPKGGYIGAHYWHHPGSFRNGFKGFCSVFISSAYSLSGTENIGTAAGNTSNPQRAIPSAVKKVFYRMGFFYIITIFLITLVVPYDNPDLGNVSPFIIAIKNGGIHVLPHITNAVILVSVLSVGNAAVFAASRNAMALVKQGWAPRFLGRVDQKGRPVISYLCSLAMACIAYVNAAPDGSVVFDWLMSVSGGGAFVIWGLSFIDHIRLRYAMKAQKIPDTVLPYKFPGSVYLSYYGVLINFLALCALVYISIFPVTHEKPSAYGFFVSFLGPSVFIAYLLISPIFVKPTFQSLKDVDLTTGRYDLVNSQMYVAESSTSELSEKDLTKPNLQSNDNKNSEDLESNTPPQKKSALQKVADFLC.

The next 12 membrane-spanning stretches (helical) occupy residues Gln-75 to Leu-95, Gly-101 to Leu-121, Ile-146 to Ile-166, Leu-181 to Gly-201, Phe-210 to Ile-230, Val-297 to Pro-317, Leu-323 to His-343, Ile-344 to Ala-364, Pro-390 to Pro-410, Phe-416 to Ile-436, Tyr-468 to Val-488, and Phe-498 to Phe-518. A disordered region spans residues Thr-550 to Gln-587.

It belongs to the amino acid-polyamine-organocation (APC) superfamily.

The protein localises to the membrane. The sequence is that of Amino-acid permease 1 (aap1) from Schizosaccharomyces pombe (strain 972 / ATCC 24843) (Fission yeast).